The sequence spans 448 residues: Probable glycine dehydrogenase (decarboxylating) subunit 1 (448 aa).

The protein belongs to the GcvP family. N-terminal subunit subfamily. In terms of assembly, the glycine cleavage system is composed of four proteins: P, T, L and H. In this organism, the P 'protein' is a heterodimer of two subunits.

The catalysed reaction is N(6)-[(R)-lipoyl]-L-lysyl-[glycine-cleavage complex H protein] + glycine + H(+) = N(6)-[(R)-S(8)-aminomethyldihydrolipoyl]-L-lysyl-[glycine-cleavage complex H protein] + CO2. Its function is as follows. The glycine cleavage system catalyzes the degradation of glycine. The P protein binds the alpha-amino group of glycine through its pyridoxal phosphate cofactor; CO(2) is released and the remaining methylamine moiety is then transferred to the lipoamide cofactor of the H protein. The sequence is that of Probable glycine dehydrogenase (decarboxylating) subunit 1 from Bacillus velezensis (strain DSM 23117 / BGSC 10A6 / LMG 26770 / FZB42) (Bacillus amyloliquefaciens subsp. plantarum).